The primary structure comprises 100 residues: Large ribosomal subunit protein uL23 (100 aa).

It belongs to the universal ribosomal protein uL23 family. In terms of assembly, part of the 50S ribosomal subunit. Contacts protein L29, and trigger factor when it is bound to the ribosome.

Functionally, one of the early assembly proteins it binds 23S rRNA. One of the proteins that surrounds the polypeptide exit tunnel on the outside of the ribosome. Forms the main docking site for trigger factor binding to the ribosome. This is Large ribosomal subunit protein uL23 from Thermosynechococcus vestitus (strain NIES-2133 / IAM M-273 / BP-1).